We begin with the raw amino-acid sequence, 862 residues long: Taxadiene synthase (862 aa).

Residues D613, D617, N757, T761, and E765 each coordinate Mg(2+). Residues 613–617 (DDMAD) carry the DDXXD motif motif.

Belongs to the terpene synthase family. It depends on Mg(2+) as a cofactor.

It carries out the reaction (2E,6E,10E)-geranylgeranyl diphosphate = taxa-4(5),11(12)-diene + diphosphate. It functions in the pathway alkaloid biosynthesis; taxol biosynthesis; taxa-4(20),11-dien-5alpha-ol from geranylgeranyl diphosphate: step 1/2. Functionally, catalyzes the cyclization of the ubiquitous isoprenoid intermediate geranylgeranyl diphosphate to taxa-4,11-diene, the parent olefin with a taxane skeleton. The polypeptide is Taxadiene synthase (TDC1) (Taxus baccata (English yew)).